The following is a 247-amino-acid chain: Oocyte zinc finger protein XlCOF20 (247 aa).

8 C2H2-type zinc fingers span residues 6–28, 34–56, 62–84, 90–112, 118–140, 146–168, 174–196, and 225–247; these read YDCR…QRVH, FPCT…QRVH, FICS…LRVH, FVCT…QRVH, FTCT…LRVH, FVCT…LRVH, FMCA…QRIC, and QSCA…MRVH.

Belongs to the krueppel C2H2-type zinc-finger protein family.

It is found in the nucleus. May be involved in transcriptional regulation. The sequence is that of Oocyte zinc finger protein XlCOF20 from Xenopus laevis (African clawed frog).